Reading from the N-terminus, the 637-residue chain is 1-deoxy-D-xylulose-5-phosphate synthase (637 aa).

Residues histidine 76 and 117-119 (GHS) contribute to the thiamine diphosphate site. Aspartate 148 provides a ligand contact to Mg(2+). Residues 149-150 (GA), asparagine 177, tyrosine 294, and glutamate 381 contribute to the thiamine diphosphate site. Asparagine 177 serves as a coordination point for Mg(2+).

Belongs to the transketolase family. DXPS subfamily. As to quaternary structure, homodimer. The cofactor is Mg(2+). It depends on thiamine diphosphate as a cofactor.

The enzyme catalyses D-glyceraldehyde 3-phosphate + pyruvate + H(+) = 1-deoxy-D-xylulose 5-phosphate + CO2. The protein operates within metabolic intermediate biosynthesis; 1-deoxy-D-xylulose 5-phosphate biosynthesis; 1-deoxy-D-xylulose 5-phosphate from D-glyceraldehyde 3-phosphate and pyruvate: step 1/1. Functionally, catalyzes the acyloin condensation reaction between C atoms 2 and 3 of pyruvate and glyceraldehyde 3-phosphate to yield 1-deoxy-D-xylulose-5-phosphate (DXP). This chain is 1-deoxy-D-xylulose-5-phosphate synthase, found in Neisseria meningitidis serogroup C / serotype 2a (strain ATCC 700532 / DSM 15464 / FAM18).